Here is a 273-residue protein sequence, read N- to C-terminus: MKKFSLVAATLIAGVVLNVNAATVATVNGKSISDTEVSEFFAPMLRGQDFKTLPDNQKKALIQQYIMQDLILQDAKKQNLEKDPLYTKELDRAKDAILVNVYQEKILNTIKIDAAKVKAFYDQNKDKYVKPARVQAKHILVATEKEAKDIINELKGLKGKELDAKFSELAKEKSIDPGSKNQGGELGWFDQSTMVKPFTDAAFALKNGTITTTPVKTNFGYHVILKENSQAKGQIKFDEVKQGIENGLKFEEFKKVINQKGQDLLNSAKVEYK.

A signal peptide spans 1 to 21 (MKKFSLVAATLIAGVVLNVNA). The PpiC domain occupies 131-228 (PARVQAKHIL…FGYHVILKEN (98 aa)).

The catalysed reaction is [protein]-peptidylproline (omega=180) = [protein]-peptidylproline (omega=0). This chain is Putative peptidyl-prolyl cis-trans isomerase Cbf2 (cbf2), found in Campylobacter jejuni subsp. jejuni serotype O:2 (strain ATCC 700819 / NCTC 11168).